The sequence spans 410 residues: Na(+)/H(+) antiporter NhaA 1/4 (410 aa).

11 helical membrane passes run 16–36, 55–75, 95–115, 125–145, 156–176, 178–198, 215–235, 275–295, 299–319, 340–360, and 371–391; these read VGGS…NSPL, LNLS…FFIV, ALPI…FLAF, GGWG…LAVV, FLLT…AVAC, SGIN…FGYL, AWLL…ACGV, IALP…AGGF, AITW…IFGG, IAGI…IAEL, and AKGA…LLLG.

Belongs to the NhaA Na(+)/H(+) (TC 2.A.33) antiporter family.

The protein localises to the cell membrane. It catalyses the reaction Na(+)(in) + 2 H(+)(out) = Na(+)(out) + 2 H(+)(in). Na(+)/H(+) antiporter that extrudes sodium in exchange for external protons. The chain is Na(+)/H(+) antiporter NhaA 1/4 from Streptomyces coelicolor (strain ATCC BAA-471 / A3(2) / M145).